Here is a 241-residue protein sequence, read N- to C-terminus: Ribonuclease P protein component 3 (241 aa).

This sequence belongs to the eukaryotic/archaeal RNase P protein component 3 family. Consists of a catalytic RNA component and at least 4-5 protein subunits.

Its subcellular location is the cytoplasm. The enzyme catalyses Endonucleolytic cleavage of RNA, removing 5'-extranucleotides from tRNA precursor.. Part of ribonuclease P, a protein complex that generates mature tRNA molecules by cleaving their 5'-ends. This is Ribonuclease P protein component 3 from Methanococcoides burtonii (strain DSM 6242 / NBRC 107633 / OCM 468 / ACE-M).